Here is a 318-residue protein sequence, read N- to C-terminus: Taste receptor type 2 member 117 (318 aa).

Residues 1–16 lie on the Extracellular side of the membrane; it reads MQHNLKTIFVISHSTL. The helical transmembrane segment at 17-37 threads the bilayer; it reads TIILFTELVTGIIGNGFMALV. At 38–53 the chain is on the cytoplasmic side; that stretch reads HCMDWLRRKKISLVNQ. A helical membrane pass occupies residues 54 to 74; that stretch reads ILTALAISRIFQLCLLFISLV. Over 75-93 the chain is Extracellular; sequence ISFSYPDLTTTSLIKVTCN. Residues 94 to 114 traverse the membrane as a helical segment; the sequence is LWIIVNHFNIWLATCLGIFYF. The Cytoplasmic segment spans residues 115–134; it reads LKISNFSNSLFLYLKWRVEK. A helical transmembrane segment spans residues 135–155; the sequence is VVLVTLLVSLVLLTLNSLLIN. Topologically, residues 156 to 189 are extracellular; sequence LEINICINEYQRNITYSFNSYYHANCHRQMLSLH. N-linked (GlcNAc...) asparagine glycosylation is present at asparagine 168. The helical transmembrane segment at 190–210 threads the bilayer; sequence IIFLSVPFVLSLSTFLLLIFS. Topologically, residues 211–238 are cytoplasmic; the sequence is LGTHHKKMQQHVQGRRDASTMAHFKALQ. A helical transmembrane segment spans residues 239 to 259; it reads TVIAFLLLYSIFILSVLVQIW. Residues 260 to 268 lie on the Extracellular side of the membrane; the sequence is KYELLKKNL. The chain crosses the membrane as a helical span at residues 269 to 289; that stretch reads FILFCQVAYVAFPSFHSYILI. Over 290 to 318 the chain is Cytoplasmic; it reads LGDMKMRQACLSVLWWQKFRKNYVEPLDL.

Belongs to the G-protein coupled receptor T2R family.

The protein resides in the membrane. Its function is as follows. Putative taste receptor which may play a role in the perception of bitterness. This Rattus norvegicus (Rat) protein is Taste receptor type 2 member 117.